The sequence spans 82 residues: Large ribosomal subunit protein uL23 (82 aa).

It belongs to the universal ribosomal protein uL23 family. Part of the 50S ribosomal subunit. Contacts protein L29.

Its function is as follows. Binds to 23S rRNA. One of the proteins that surrounds the polypeptide exit tunnel on the outside of the ribosome. The protein is Large ribosomal subunit protein uL23 of Picrophilus torridus (strain ATCC 700027 / DSM 9790 / JCM 10055 / NBRC 100828 / KAW 2/3).